Here is a 359-residue protein sequence, read N- to C-terminus: Probable L-ascorbate peroxidase 7, chloroplastic (359 aa).

The transit peptide at 1–71 (MAAQRLAALH…KAAGSGRSVM (71 aa)) directs the protein to the chloroplast. Histidine 118 acts as the Proton acceptor in catalysis. Histidine 247 is a binding site for heme b. A K(+)-binding site is contributed by threonine 248. The tract at residues 251-277 (RSRPERSGWGKPETKYTKNGPGAPGGQ) is disordered. Basic and acidic residues predominate over residues 252–266 (SRPERSGWGKPETKY). The K(+) site is built by threonine 280 and aspartate 287.

Belongs to the peroxidase family. Ascorbate peroxidase subfamily. It depends on heme b as a cofactor. Expressed in roots, leaves, stems and flowers.

It is found in the plastid. Its subcellular location is the chloroplast stroma. It carries out the reaction L-ascorbate + H2O2 = L-dehydroascorbate + 2 H2O. Plays a key role in hydrogen peroxide removal. This is Probable L-ascorbate peroxidase 7, chloroplastic from Oryza sativa subsp. japonica (Rice).